Consider the following 429-residue polypeptide: Trigger factor (429 aa).

In terms of domain architecture, PPIase FKBP-type spans 161-246 (GDRLSIDFKG…INEVALPKEP (86 aa)).

This sequence belongs to the FKBP-type PPIase family. Tig subfamily.

The protein localises to the cytoplasm. The enzyme catalyses [protein]-peptidylproline (omega=180) = [protein]-peptidylproline (omega=0). Its function is as follows. Involved in protein export. Acts as a chaperone by maintaining the newly synthesized protein in an open conformation. Functions as a peptidyl-prolyl cis-trans isomerase. This chain is Trigger factor, found in Ruthia magnifica subsp. Calyptogena magnifica.